Here is a 371-residue protein sequence, read N- to C-terminus: Transcription factor bHLH77 (371 aa).

Disordered regions lie at residues 1–25 (MNMD…FGNG), 65–206 (SGGI…SLAE), and 352–371 (QSNN…KLEP). Positions 85–96 (SQPTTQESNKSS) are enriched in polar residues. The span at 128–142 (SPASSSLTASNSKVS) shows a compositional bias: low complexity. Positions 165-190 (GVEKCDSKGDNKDDAKPPEAPKDYIH) are enriched in basic and acidic residues. The region spanning 197–247 (QATDSHSLAERARREKISERMTLLQDLVPGCNRITGKAVMLDEIINYVQSL) is the bHLH domain.

In terms of assembly, homodimer. Interacts with IBH1. Expressed constitutively in roots, leaves, stems, and flowers.

The protein localises to the nucleus. This is Transcription factor bHLH77 (BHLH77) from Arabidopsis thaliana (Mouse-ear cress).